The chain runs to 461 residues: MNLQIIILAAGQGKRMYSDTPKVLHHLAGKPLLTHVVETAQQLNPDAIHVIYGHGGEQIKSSLPNLPVHWVHQAEQLGTGHAVLQAMPHIPDDAYVLVLSADVPLIQVETLQSLIECSQRQNPDHSVLALLVAELENPSGLGRIIRNNQGEIYSIVEEKDANEQVKNIKEIYSGVCCTLANNLKKWLPQLSNSNAQGEYYLTEIISFAVQNKTPIRSLTTKNSFEVQGINNRQQLQQLERIWQQRAANQLMEKGVTLADANRFDLRGELYCGKDVYIDINCIFTGKVVLGNGCKIGPNCSLTNVTLGDGCEVYANSVLEGCHIANDCHIGPFARLRSGTQLASHCKIGNFVETKKAIFDEGTKASHLSYLGDVLLGKNVNVGAGTITCNYDGVNKHQTIIEDGVFIGSDTQLVAPVTVGANATIGAGSTIRRNVPPDELTLTESRQKTIYGWKRPAKRERD.

The pyrophosphorylase stretch occupies residues 1–232 (MNLQIIILAA…SFEVQGINNR (232 aa)). Residues 8-11 (LAAG), Lys-22, Gln-73, and 78-79 (GT) each bind UDP-N-acetyl-alpha-D-glucosamine. Asp-102 provides a ligand contact to Mg(2+). Positions 142, 157, and 230 each coordinate UDP-N-acetyl-alpha-D-glucosamine. A Mg(2+)-binding site is contributed by Asn-230. The interval 233–253 (QQLQQLERIWQQRAANQLMEK) is linker. An N-acetyltransferase region spans residues 254–461 (GVTLADANRF…WKRPAKRERD (208 aa)). The UDP-N-acetyl-alpha-D-glucosamine site is built by Arg-336 and Lys-354. His-366 (proton acceptor) is an active-site residue. UDP-N-acetyl-alpha-D-glucosamine is bound by residues Tyr-369 and Asn-380. Residues Ala-383, 389–390 (NY), Ser-408, and Ala-426 contribute to the acetyl-CoA site.

The protein in the N-terminal section; belongs to the N-acetylglucosamine-1-phosphate uridyltransferase family. In the C-terminal section; belongs to the transferase hexapeptide repeat family. In terms of assembly, homotrimer. Requires Mg(2+) as cofactor.

It localises to the cytoplasm. It catalyses the reaction alpha-D-glucosamine 1-phosphate + acetyl-CoA = N-acetyl-alpha-D-glucosamine 1-phosphate + CoA + H(+). It carries out the reaction N-acetyl-alpha-D-glucosamine 1-phosphate + UTP + H(+) = UDP-N-acetyl-alpha-D-glucosamine + diphosphate. The protein operates within nucleotide-sugar biosynthesis; UDP-N-acetyl-alpha-D-glucosamine biosynthesis; N-acetyl-alpha-D-glucosamine 1-phosphate from alpha-D-glucosamine 6-phosphate (route II): step 2/2. It participates in nucleotide-sugar biosynthesis; UDP-N-acetyl-alpha-D-glucosamine biosynthesis; UDP-N-acetyl-alpha-D-glucosamine from N-acetyl-alpha-D-glucosamine 1-phosphate: step 1/1. It functions in the pathway bacterial outer membrane biogenesis; LPS lipid A biosynthesis. Functionally, catalyzes the last two sequential reactions in the de novo biosynthetic pathway for UDP-N-acetylglucosamine (UDP-GlcNAc). The C-terminal domain catalyzes the transfer of acetyl group from acetyl coenzyme A to glucosamine-1-phosphate (GlcN-1-P) to produce N-acetylglucosamine-1-phosphate (GlcNAc-1-P), which is converted into UDP-GlcNAc by the transfer of uridine 5-monophosphate (from uridine 5-triphosphate), a reaction catalyzed by the N-terminal domain. This is Bifunctional protein GlmU from Legionella pneumophila (strain Lens).